We begin with the raw amino-acid sequence, 289 residues long: MDIEIKDVEHRYQMKTPFERLAIYDVNAVIKEGSYVAVIGHTGSGKSTLLQHLNGLLKPTKGQIRLGEDVLEAGKKNKHLKALRKKVGIVFQFPEHQLFEETILKDIAFGPINFGMSREKAEEKAREMLKLVGLGAELSDRSPFELSGGQMRRVAIAGVLAMEPEVLVLDEPTAGLDPRGRKEIMDMFYSLHKQRNLTTILVTHSMEDAAAYADELIVMHKGTVKAKGTPRELFSRKDDIAALGLDLPETIKFQKRLEETLGITFKAPILTIEEAASEVKALFQEENAL.

The ABC transporter domain maps to 3-246; the sequence is IEIKDVEHRY…KDDIAALGLD (244 aa). An ATP-binding site is contributed by 40 to 47; it reads GHTGSGKS.

Belongs to the ABC transporter superfamily. Energy-coupling factor EcfA family. In terms of assembly, forms a stable energy-coupling factor (ECF) transporter complex composed of 2 membrane-embedded substrate-binding proteins (S component), 2 ATP-binding proteins (A component) and 2 transmembrane proteins (T component).

It localises to the cell membrane. Its function is as follows. ATP-binding (A) component of a common energy-coupling factor (ECF) ABC-transporter complex. Unlike classic ABC transporters this ECF transporter provides the energy necessary to transport a number of different substrates. The polypeptide is Energy-coupling factor transporter ATP-binding protein EcfA2 (Bacillus licheniformis (strain ATCC 14580 / DSM 13 / JCM 2505 / CCUG 7422 / NBRC 12200 / NCIMB 9375 / NCTC 10341 / NRRL NRS-1264 / Gibson 46)).